We begin with the raw amino-acid sequence, 402 residues long: UDP-glucose 6-dehydrogenase (402 aa).

NAD(+) is bound by residues 2-19 (KIAV…GVLL), Val11, Asp29, Lys34, Thr83, Thr118, and Glu145. Residues 141-145 (EFLRE), Lys204, Asn208, 249-253 (YNNPS), and Gly257 contribute to the substrate site. An NAD(+)-binding site is contributed by Tyr259. Cys260 functions as the Nucleophile in the catalytic mechanism. An NAD(+)-binding site is contributed by Lys263. Lys320 provides a ligand contact to substrate. Arg327 serves as a coordination point for NAD(+).

The protein belongs to the UDP-glucose/GDP-mannose dehydrogenase family.

It catalyses the reaction UDP-alpha-D-glucose + 2 NAD(+) + H2O = UDP-alpha-D-glucuronate + 2 NADH + 3 H(+). The protein operates within nucleotide-sugar biosynthesis; UDP-alpha-D-glucuronate biosynthesis; UDP-alpha-D-glucuronate from UDP-alpha-D-glucose: step 1/1. Its function is as follows. Catalyzes the formation of UDP-glucuronic acid which is required for capsular hyaluronic acid synthesis. The polypeptide is UDP-glucose 6-dehydrogenase (hasB) (Streptococcus pyogenes serotype M1).